The primary structure comprises 415 residues: Protein CDC73 homolog (415 aa).

This sequence belongs to the CDC73 family. In terms of assembly, component of the nuclear PAF1 complex (PAF1C), which consists of VIP2/ELF7/PAF1, VIP3/SKI8/WDR61, VIP4/LEO1, VIP5/RTF1, VIP6/ELF8/CTR9 and CDC73. In terms of tissue distribution, expressed in root tips, shoot apex, young leaves and flowers, especially in stamen filaments and carpels.

The protein resides in the nucleus. In terms of biological role, component of the PAF1 complex (PAF1C) which is involved in histone modifications such as methylation on histone H3 'Lys-4' (H3K4me3). Involved in regulation of flowering time. Required for the expression of the flowering repressors FLC and MADS-box genes of the MAF family. Required for histone H3 trimethylation on 'Lys-4' (H3K4me3) at the FLC locus. Prevents trimethylation on 'Lys-27' (H3K27me3) at the same locus. This chain is Protein CDC73 homolog, found in Arabidopsis thaliana (Mouse-ear cress).